Reading from the N-terminus, the 245-residue chain is MTSATKTNNSGSISSPIVVALDYANKDAALAFADQVSPQDCRLKVGKEMFTLYGPELIRDLHQRGFDVFLDLKFHDIPNTTARAVAAAAELGVWMVNVHASGGARMMSAAKEALLPYGAQAPLLIAVTVLTSMDSEDLRDIGITISPAEQAERLAKLTWDCGLDGVVCSAHEAVRLKQVCGEDFSLVTPGIRPQGSEAGDQRRIMTPEQAVAVGVDYMVIGRPITQSPDPEKTLREILASLTKVA.

Substrate is bound by residues Asp22, Lys44, 71-80, Thr131, Arg192, Gln201, Gly221, and Arg222; that span reads DLKFHDIPNT. Lys73 functions as the Proton donor in the catalytic mechanism.

The protein belongs to the OMP decarboxylase family. Type 1 subfamily. In terms of assembly, homodimer.

The catalysed reaction is orotidine 5'-phosphate + H(+) = UMP + CO2. Its pathway is pyrimidine metabolism; UMP biosynthesis via de novo pathway; UMP from orotate: step 2/2. Its function is as follows. Catalyzes the decarboxylation of orotidine 5'-monophosphate (OMP) to uridine 5'-monophosphate (UMP). This Yersinia pseudotuberculosis serotype O:1b (strain IP 31758) protein is Orotidine 5'-phosphate decarboxylase.